Here is a 695-residue protein sequence, read N- to C-terminus: MKKLNYLLIVSFIFILNLLISKSQVLIDVTAKCELIDSLSPCKDNLNYTHIYLPTGYTQAAISAQITPLFQQASILPTDCQSNLKNLLCISSYMECNENIPNISPSFPLPSYPCNKYCEKVKDVCSAYMAILGPYVNCSAVQNGNEFFPHTGTDYDLTAYGGSANEEIQCSGPNLASNSTSAPIKFCPSPLIWVDSDTINNKRAYQETTPNCVLPCPTNVYTEKEYKTKFYSEAILFSFSTACSFYLIFTFGVFPNKYTNRNWIIVYLGITAICLAISYAVQEARYGGGDWRCTSDPGRYKSSEDGTCILGGFFFQIGGLGTILFLSLYSFDMFLTMNMMTNKYFIQTSVGMWALIIFYALLPIKHYESSIASAGCWLSNEDNMFWQYFCFYVPSYVATFFLGVFIITSIYKVFKMTVMFKSIKDKRILLLNIRSIIFLIAIMFCVSFSTMYPLYVTYNGDDFSKSVEVYVTCLYANIPNGNEVCPQIVFPQFSLRYMNAITMAIIGIVGLIGLGIDPHILQIYRESIRFKFLLGLVGIQWGTNSPQPLKQGSTTDSSSGSGSGNGSNSGNNRENRKSQRKSRGVSIGMKKINLSASSESSNNLLNQSTPGNLNINESISSIDTSNNNNNNNNNNNNNNNNNNNNNNNNNNNNNNNNNNNNNNNNNNNNNNNYSNNNNNNNNNNNNIERINSDNV.

The first 23 residues, Met-1–Ser-23, serve as a signal peptide directing secretion. At Gln-24–Glu-233 the chain is on the extracellular side. One can recognise an FZ domain in the interval Asp-28 to Pro-173. Cystine bridges form between Cys-33-Cys-96, Cys-42-Cys-89, Cys-80-Cys-125, Cys-114-Cys-170, and Cys-118-Cys-138. Asn-47 is a glycosylation site (N-linked (GlcNAc...) asparagine). N-linked (GlcNAc...) asparagine glycosylation is found at Asn-137 and Asn-178. The chain crosses the membrane as a helical span at residues Ala-234–Phe-254. At Pro-255–Asn-262 the chain is on the cytoplasmic side. A helical membrane pass occupies residues Trp-263 to Glu-283. At Ala-284–Thr-307 the chain is on the extracellular side. The chain crosses the membrane as a helical span at residues Cys-308–Leu-328. At Tyr-329–Lys-343 the chain is on the cytoplasmic side. The chain crosses the membrane as a helical span at residues Tyr-344–Ile-364. Over Lys-365–Gln-387 the chain is Extracellular. Residues Tyr-388–Thr-408 traverse the membrane as a helical segment. Residues Ser-409 to Ser-435 are Cytoplasmic-facing. Residues Ile-436 to Val-456 form a helical membrane-spanning segment. At Thr-457–Ala-500 the chain is on the extracellular side. A helical transmembrane segment spans residues Ile-501–Leu-521. At Gln-522 to Val-695 the chain is on the cytoplasmic side. A compositionally biased stretch (polar residues) spans Ser-545 to Asp-556. The disordered stretch occupies residues Ser-545–Val-695. Residues Asn-593–Ser-608 show a composition bias toward low complexity. The segment covering Thr-609 to Ser-625 has biased composition (polar residues). The segment covering Asn-626 to Asn-686 has biased composition (low complexity). Residues Asn-653 to Asn-691 are a coiled coil.

Belongs to the G-protein coupled receptor Fz/Smo family.

It is found in the membrane. This Dictyostelium discoideum (Social amoeba) protein is Frizzled and smoothened-like protein O (fslO).